The following is a 156-amino-acid chain: dCTP deaminase (156 aa).

DCTP contacts are provided by residues 79–84 (RSSLAR), Asp-95, Gln-124, and Tyr-138.

This sequence belongs to the dCTP deaminase family. As to quaternary structure, homotrimer.

The enzyme catalyses dCTP + H2O + H(+) = dUTP + NH4(+). Its pathway is pyrimidine metabolism; dUMP biosynthesis; dUMP from dCTP (dUTP route): step 1/2. In terms of biological role, catalyzes the deamination of dCTP to dUTP. This Pyrococcus horikoshii (strain ATCC 700860 / DSM 12428 / JCM 9974 / NBRC 100139 / OT-3) protein is dCTP deaminase.